Reading from the N-terminus, the 358-residue chain is Methylthioribose-1-phosphate isomerase (358 aa).

Substrate is bound by residues 54-56, Arg-96, and Gln-205; that span reads RGA. The active-site Proton donor is the Asp-246. Substrate is bound at residue 256–257; it reads NK.

This sequence belongs to the eIF-2B alpha/beta/delta subunits family. MtnA subfamily.

The enzyme catalyses 5-(methylsulfanyl)-alpha-D-ribose 1-phosphate = 5-(methylsulfanyl)-D-ribulose 1-phosphate. Its pathway is amino-acid biosynthesis; L-methionine biosynthesis via salvage pathway; L-methionine from S-methyl-5-thio-alpha-D-ribose 1-phosphate: step 1/6. Its function is as follows. Catalyzes the interconversion of methylthioribose-1-phosphate (MTR-1-P) into methylthioribulose-1-phosphate (MTRu-1-P). This is Methylthioribose-1-phosphate isomerase from Pseudomonas syringae pv. syringae (strain B728a).